A 154-amino-acid polypeptide reads, in one-letter code: 3-hydroxyacyl-[acyl-carrier-protein] dehydratase FabZ (154 aa).

Residue His54 is part of the active site.

This sequence belongs to the thioester dehydratase family. FabZ subfamily.

Its subcellular location is the cytoplasm. The enzyme catalyses a (3R)-hydroxyacyl-[ACP] = a (2E)-enoyl-[ACP] + H2O. Involved in unsaturated fatty acids biosynthesis. Catalyzes the dehydration of short chain beta-hydroxyacyl-ACPs and long chain saturated and unsaturated beta-hydroxyacyl-ACPs. This chain is 3-hydroxyacyl-[acyl-carrier-protein] dehydratase FabZ, found in Shewanella oneidensis (strain ATCC 700550 / JCM 31522 / CIP 106686 / LMG 19005 / NCIMB 14063 / MR-1).